We begin with the raw amino-acid sequence, 144 residues long: Large ribosomal subunit protein uL16c (144 aa).

The protein belongs to the universal ribosomal protein uL16 family. In terms of assembly, part of the 50S ribosomal subunit.

The protein resides in the plastid. Its subcellular location is the chloroplast. The chain is Large ribosomal subunit protein uL16c from Chara vulgaris (Common stonewort).